The sequence spans 361 residues: D-alanine--D-alanine ligase (361 aa).

Residues 144–350 (KLCVSEAGIA…FPELCDRLLQ (207 aa)) form the ATP-grasp domain. Residue 177 to 232 (PETLIYPVFVKPAHLGSSVGISKVSVQGELPEALAHACNLDTKVLIEQAMHGKEIE) coordinates ATP. Mg(2+) is bound by residues D303, E317, and N319.

The protein belongs to the D-alanine--D-alanine ligase family. It depends on Mg(2+) as a cofactor. Mn(2+) is required as a cofactor.

It is found in the cytoplasm. The enzyme catalyses 2 D-alanine + ATP = D-alanyl-D-alanine + ADP + phosphate + H(+). The protein operates within cell wall biogenesis; peptidoglycan biosynthesis. Cell wall formation. The chain is D-alanine--D-alanine ligase from Chlorobium phaeovibrioides (strain DSM 265 / 1930) (Prosthecochloris vibrioformis (strain DSM 265)).